Consider the following 201-residue polypeptide: Small ribosomal subunit protein uS4c (201 aa).

In terms of domain architecture, S4 RNA-binding spans 89-150 (MRLDNILFRL…KQRSKVLIQN (62 aa)).

Belongs to the universal ribosomal protein uS4 family. In terms of assembly, part of the 30S ribosomal subunit. Contacts protein S5. The interaction surface between S4 and S5 is involved in control of translational fidelity.

It localises to the plastid. It is found in the chloroplast. Its function is as follows. One of the primary rRNA binding proteins, it binds directly to 16S rRNA where it nucleates assembly of the body of the 30S subunit. In terms of biological role, with S5 and S12 plays an important role in translational accuracy. The polypeptide is Small ribosomal subunit protein uS4c (rps4) (Acorus calamus (Sweet flag)).